We begin with the raw amino-acid sequence, 680 residues long: Glutamine-dependent NAD(+) synthetase (680 aa).

The 265-residue stretch at 12-276 (VRVAACTHHA…EHRSVADVDT (265 aa)) folds into the CN hydrolase domain. Glu52 acts as the Proton acceptor; for glutaminase activity in catalysis. Lys121 serves as the catalytic For glutaminase activity. Tyr127 contributes to the L-glutamine binding site. Residue Cys176 is the Nucleophile; for glutaminase activity of the active site. The L-glutamine site is built by Ser203 and Arg209. Position 366 to 373 (366 to 373 (GVSGGLDS)) interacts with ATP. Asn456 contributes to the deamido-NAD(+) binding site. Position 480 (Thr480) interacts with ATP. Residues Glu485, 490–493 (WSTY), and Lys636 contribute to the deamido-NAD(+) site.

In the C-terminal section; belongs to the NAD synthetase family.

It carries out the reaction deamido-NAD(+) + L-glutamine + ATP + H2O = L-glutamate + AMP + diphosphate + NAD(+) + H(+). The protein operates within cofactor biosynthesis; NAD(+) biosynthesis; NAD(+) from deamido-NAD(+) (L-Gln route): step 1/1. Functionally, catalyzes the ATP-dependent amidation of deamido-NAD to form NAD. Uses L-glutamine as a nitrogen source. This is Glutamine-dependent NAD(+) synthetase from Mycobacterium leprae (strain TN).